The chain runs to 375 residues: Chanoclavine-I aldehyde reductase ifgG (375 aa).

FMN contacts are provided by residues 31 to 33, Ala-66, Gln-108, and His-176; that span reads PTT. Positions 176 and 179 each coordinate substrate. The active-site Proton donor is Tyr-181. Residues Lys-228, Gly-300, 325 to 326, and Arg-326 contribute to the FMN site; that span reads GR. Tyr-353 contributes to the substrate binding site.

The protein belongs to the NADH:flavin oxidoreductase/NADH oxidase family. The cofactor is FMN.

The enzyme catalyses dihydrochanoclavine-I aldehyde + NADP(+) = chanoclavine-I aldehyde + NADPH + H(+). The protein operates within alkaloid biosynthesis; ergot alkaloid biosynthesis. Its function is as follows. Chanoclavine-I aldehyde reductase; part of the gene cluster that mediates the biosynthesis of isofumigaclavines, fungal ergot alkaloids. The tryptophan dimethylallyltransferase ifgA catalyzes the first step of ergot alkaloid biosynthesis by condensing dimethylallyl diphosphate (DMAP) and tryptophan to form 4-dimethylallyl-L-tryptophan. The second step is catalyzed by the methyltransferase ifgB that methylates 4-dimethylallyl-L-tryptophan in the presence of S-adenosyl-L-methionine, resulting in the formation of N-methyl-dimethylallyl-L-tryptophan. The catalase ifgD and the FAD-dependent oxidoreductase ifgC then transform N-methyl-dimethylallyl-L-tryptophan to chanoclavine-I which is further oxidized by ifgE in the presence of NAD(+), resulting in the formation of chanoclavine-I aldehyde. The chanoclavine-I aldehyde reductases ifgG and/or fgaOx3 reduce chanoclavine-I aldehyde to dihydrochanoclavine-I aldehyde that spontaneously dehydrates to form 6,8-dimethyl-6,7-didehydroergoline. The festuclavine dehydrogenases ifgF1 and/or ifgF2 then catalyze the reduction of 6,8-dimethyl-6,7-didehydroergoline to form festuclavine. Hydrolysis of festuclavine by a yet undetermined cytochrome P450 monooxygenase (called ifgH) then leads to the formation of isofumigaclavine B which is in turn acetylated by ifgI to isofumigaclavine A. Penicillium roqueforti has interestingly at least two sets of genes for the consumption of chanoclavine-I aldehyde on three different loci, the OYEs ifgG/fgaOx3 and the festuclavine synthase homologs ifgF1/ifgF2. The reason for the duplication of these genes is unclear, probably to ensure the conversion of chanoclavine-I aldehyde by differential gene expression under various environmental conditions. The polypeptide is Chanoclavine-I aldehyde reductase ifgG (Penicillium roqueforti (strain FM164)).